Here is a 341-residue protein sequence, read N- to C-terminus: S-adenosylmethionine:tRNA ribosyltransferase-isomerase (341 aa).

Belongs to the QueA family. In terms of assembly, monomer.

The protein resides in the cytoplasm. The enzyme catalyses 7-aminomethyl-7-carbaguanosine(34) in tRNA + S-adenosyl-L-methionine = epoxyqueuosine(34) in tRNA + adenine + L-methionine + 2 H(+). The protein operates within tRNA modification; tRNA-queuosine biosynthesis. Transfers and isomerizes the ribose moiety from AdoMet to the 7-aminomethyl group of 7-deazaguanine (preQ1-tRNA) to give epoxyqueuosine (oQ-tRNA). This Pelodictyon phaeoclathratiforme (strain DSM 5477 / BU-1) protein is S-adenosylmethionine:tRNA ribosyltransferase-isomerase.